A 142-amino-acid polypeptide reads, in one-letter code: Small ribosomal subunit protein uS12 (142 aa).

The protein belongs to the universal ribosomal protein uS12 family. In terms of assembly, part of the 30S ribosomal subunit.

Its function is as follows. With S4 and S5 plays an important role in translational accuracy. Located at the interface of the 30S and 50S subunits. The polypeptide is Small ribosomal subunit protein uS12 (Methanosarcina mazei (strain ATCC BAA-159 / DSM 3647 / Goe1 / Go1 / JCM 11833 / OCM 88) (Methanosarcina frisia)).